Consider the following 1207-residue polypeptide: DNA-directed RNA polymerase subunit beta' (1207 aa).

Residues C60, C62, C75, and C78 each coordinate Zn(2+). Mg(2+)-binding residues include D450, D452, and D454. C819, C893, C900, and C903 together coordinate Zn(2+).

The protein belongs to the RNA polymerase beta' chain family. As to quaternary structure, the RNAP catalytic core consists of 2 alpha, 1 beta, 1 beta' and 1 omega subunit. When a sigma factor is associated with the core the holoenzyme is formed, which can initiate transcription. The cofactor is Mg(2+). Zn(2+) serves as cofactor.

It catalyses the reaction RNA(n) + a ribonucleoside 5'-triphosphate = RNA(n+1) + diphosphate. Functionally, DNA-dependent RNA polymerase catalyzes the transcription of DNA into RNA using the four ribonucleoside triphosphates as substrates. This chain is DNA-directed RNA polymerase subunit beta', found in Streptococcus pyogenes serotype M12 (strain MGAS2096).